A 130-amino-acid chain; its full sequence is 3-aminoacrylate deaminase RutC (130 aa).

The protein belongs to the RutC family.

It carries out the reaction (Z)-3-aminoacrylate + H2O + H(+) = 3-oxopropanoate + NH4(+). In terms of biological role, involved in pyrimidine catabolism. Catalyzes the deamination of 3-aminoacrylate to malonic semialdehyde, a reaction that can also occur spontaneously. RutC may facilitate the reaction and modulate the metabolic fitness, rather than catalyzing essential functions. The chain is 3-aminoacrylate deaminase RutC from Haliangium ochraceum (strain DSM 14365 / JCM 11303 / SMP-2).